Here is a 768-residue protein sequence, read N- to C-terminus: MSTPENPDPVDTTTQDAAAAIVAEEGTPPSESLRDEYEQLADLVRKYRYAYYQEDSPTVSDAEFDELYRRLEELEALHPELVSNDSPTQEVGGEVSSAFAAVEHLQRMYSLDDVFSLDELEAWVRKAEASVAKLGDSVPPIAWLTELKIDGLAVNLLYRDGKLVRAATRGDGTTGEDITHNVLTIKEIPRQLSGSGYPSEVEIRGEVFIPSKAFLEFNESLVAAGKAPLANPRNAAAGSLRQKDPAETAKRPLSMFVHGIGAREGLDAKSQSESYKLLEEWGLPVSPYLKVLETFDDVLKFIADYGERRHKLVHEIDGIVVKIDDFATQRALGYTSRVPRWAAAYKYPPEEVHTKLLDIAVNVGRTGRVTPFGLMEPVKVAGSTVGMATLHNQDVVKAKGVMIGDIVILRKAGDVIPEIVGPVLALRDKQEPPVREFVMPTECPSCGTPLAPAKESDVDIRCPNAKSCPSQLRERVFHVASRGAFDIEALGWEAAVALTQPAEPETPPLTSEARLFSLTREDLADVLIRREKRSKGVGTGEYELVPYFYTKGTAKSPSKPTATTEKLFAELEKAKQQPLWRVLVALSIRHVGPTASRALATAFGSMDAIRNATEEQMAHVDGVGPTIAVALKEWFAVDWHNEIVDSWAAAGVRMEDERDASVPRTLEGLTVVVTGTLPNFSRDEAKEAIIIRGGKASGSVSKNTSYLVAGESAGTKLDKAEQLGVPVLDEDGFRELLANGPAQTGTEAEAATDEATVVDETAAEAATE.

NAD(+) is bound by residues Asp-61 to Asp-65, Ser-110 to Leu-111, and Glu-146. Lys-148 (N6-AMP-lysine intermediate) is an active-site residue. NAD(+)-binding residues include Arg-169, Glu-206, Lys-322, and Lys-346. Zn(2+) is bound by residues Cys-443, Cys-446, Cys-462, and Cys-468. The BRCT domain occupies Ser-661–Ala-750. A disordered region spans residues Asn-739–Glu-768. Positions Thr-746–Glu-768 are enriched in low complexity.

The protein belongs to the NAD-dependent DNA ligase family. LigA subfamily. It depends on Mg(2+) as a cofactor. The cofactor is Mn(2+).

It catalyses the reaction NAD(+) + (deoxyribonucleotide)n-3'-hydroxyl + 5'-phospho-(deoxyribonucleotide)m = (deoxyribonucleotide)n+m + AMP + beta-nicotinamide D-nucleotide.. Functionally, DNA ligase that catalyzes the formation of phosphodiester linkages between 5'-phosphoryl and 3'-hydroxyl groups in double-stranded DNA using NAD as a coenzyme and as the energy source for the reaction. It is essential for DNA replication and repair of damaged DNA. In Paenarthrobacter aurescens (strain TC1), this protein is DNA ligase.